The chain runs to 409 residues: TNF receptor-associated factor 1 (409 aa).

S139 carries the post-translational modification Phosphoserine. The stretch at 167-256 forms a coiled coil; sequence EELALQHLVK…EHSLRLMEEA (90 aa). Glycyl lysine isopeptide (Lys-Gly) (interchain with G-Cter in ubiquitin) cross-links involve residues K178 and K186. Residues 259 to 405 enclose the MATH domain; it reads DGTFLWKITN…DDTMFLKCIV (147 aa).

Homotrimer. Heterotrimer with TRAF2. Interacts with TNFRSF1A/TNFR1, TNFRSF1B/TNFR2, TNFRSF4, TNFRSF5/CD40, TNFRSF8/CD30, TNFRSF9/CD137, TNFRSF11A/RANK, TNFRSF13C, TNFRSF18/AITR, TNFRSF17/BCMA, TNFRSF19/TROY, TNFRSF19L/RELT, XEDAR, EDAR, Epstein-Barr virus BNFL1/LMP-1, TANK/ITRAF, TRAIP and RIPK2. Interacts with BIRC2 and BIRC3 N-terminus; a single BIRC2 or BIRC3 molecule interacts with a heterotrimer formed by TRAF1 and TRAF2. Interacts with MAP3K14. Interacts with NFATC2IP, TRAFD1 and with HIVEP3. Interacts with GPS2. In terms of processing, polyubiquitinated by BIRC2 and/or BIRC3, leading to its subsequent proteasomal degradation. Ubiquitinated by the SCF(FBXL2) complex, leading to its degradation by the proteasome.

The protein resides in the cytoplasm. Its function is as follows. Adapter molecule that regulates the activation of NF-kappa-B and JNK. Plays a role in the regulation of cell survival and apoptosis. The heterotrimer formed by TRAF1 and TRAF2 is part of a E3 ubiquitin-protein ligase complex that promotes ubiquitination of target proteins, such as MAP3K14. The TRAF1/TRAF2 complex recruits the antiapoptotic E3 protein-ubiquitin ligases BIRC2 and BIRC3 to TNFRSF1B/TNFR2. This Mus musculus (Mouse) protein is TNF receptor-associated factor 1 (Traf1).